Here is a 111-residue protein sequence, read N- to C-terminus: Ig kappa chain V region 3368 (111 aa).

The tract at residues 1 to 24 (ADIVMTQTPSSVSAAVGGTVTIKC) is framework-1. Positions 25–35 (QASESIGNELA) are complementarity-determining-1. The framework-2 stretch occupies residues 36–50 (WYQQKPGQPPKLLIY). Residues 51 to 57 (RASKLAS) are complementarity-determining-2. The framework-3 stretch occupies residues 58-89 (GVSSRFKGSGSGTEFTLTISGVQCDDAGIYYC). Residues 90–101 (QQDWNSNNVVNN) are complementarity-determining-3. Residues 102 to 111 (FGGGTEVVVK) form a framework-4 region.

In Oryctolagus cuniculus (Rabbit), this protein is Ig kappa chain V region 3368.